Reading from the N-terminus, the 366-residue chain is ADP-ribosylarginine hydrolase Tri1 (366 aa).

The segment at 1–65 (MIDLREDTWT…LNTPPCLIPE (65 aa)) is N-terminal extension. Residues 74 to 366 (GALVGLAIGD…LFYMAPEEDF (293 aa)) form an ADP-ribosyl hydrolase domain region. The Mg(2+) site is built by threonine 116, aspartate 117, aspartate 118, aspartate 161, and aspartate 317.

The protein belongs to the ADP-ribosylglycohydrolase family. Forms a stable complex with cognate effector protein Tre1-Sp. Mg(2+) is required as a cofactor.

It carries out the reaction N(omega)-(ADP-D-ribosyl)-L-arginyl-[protein] + H2O = ADP-D-ribose + L-arginyl-[protein]. Its function is as follows. Immunity component of a contact-dependent interbacterial competition system (also called effector-immunity systems). Acts as an arginine mono-ADP-ribosylhydrolase, mediating the removal of mono-ADP-ribose attached to arginine residues on proteins. De-ADP-ribosylates FtsZ, is able to act on other proteins as well. Neutralizes the toxic activity of cognate toxin Tre1-Sp. Expression of this protein alone in E.coli partially protects the cells against competition by wild-type S.proteamaculans. Neutralizes Tre1-Sp both by occluding its active site via its N-terminal extension and by hydrolyzing the ADP-ribosyl moiety from FtsZ; the 2 activities are dissociable by mutagenesis. The chain is ADP-ribosylarginine hydrolase Tri1 from Serratia proteamaculans (strain 568).